We begin with the raw amino-acid sequence, 782 residues long: MTHEEHHAAKTLGIGKAIAVLTSGGDAQGMNAAVRAVVRVGIFTGARVFFVHEGYQGLVDGGDHIREATWESVSMMLQLGGTVIGSARCKDFREREGRLRAAHNLVKRGITNLCVIGGDGSLTGADTFRSEWSDLLSDLQKAGKITAEEATKSSYLNIVGLVGSIDNDFCGTDMTIGTDSALHRIIEIVDAITTTAQSHQRTFVLEVMGRHCGYLALVTSLSCGADWVFIPECPPDDDWEEHLCRRLSETRTRGSRLNIIIVAEGAIDKNGKPITSEEIKELVVKRLGYDTRVTVLGHVQRGGTPSAFDRILGSRMGVEAVMALLEGTPDTPACVVSLSGNQAVRLPLMECVQVTKDVTKAMNDRKFDEAMKLRGRSFMNNWEVYKLLAHIRPPVSKTSATMHTVAVMNVGAPAAGMNAAVRSTVRIGLIQGNRVLVVHDGFEGLAKGQIEEAGWSYVGGWTGQGGSKLGTKRTLPKKSFEQISANITKFNIQGLIIIGGFEAYTGGLELMEGRKQFDELCIPFVVIPATVSNNVPGSDFSVGADTALNTICTTCDRIKQSAAGTKRRVFIIETMGGYCGYLATMAGLAAGADAAYIFEEPFTIRDLQANVEHLVQKMKTTVKRGLVLRNEKCNENYTTDFIFNLYSEEGKGIFDSRKNVLGHMQQGGSPTPFDRNFATKMGAKAMNWMSGKIKESYRNGRIFANTPDSGCVLGMRKRALVFQPVTELKDQTDFDHRIPKEQWWLKLRPILKILAKYEIDLDTTEHAHLEHISRKRSGETSI.

At Thr2 the chain carries N-acetylthreonine. Residues 2 to 390 (THEEHHAAKT…NWEVYKLLAH (389 aa)) are N-terminal catalytic PFK domain 1. ATP-binding positions include Gly25, 88-89 (RC), and 118-121 (GDGS). Residue Asp119 coordinates Mg(2+). Ser133 bears the Phosphoserine mark. Substrate contacts are provided by residues 164-166 (SID), Arg201, 208-210 (MGR), Glu264, Arg292, and 298-301 (HVQR). Asp166 acts as the Proton acceptor in catalysis. Ser377 is subject to Phosphoserine. Residues 391–403 (IRPPVSKTSATMH) form an interdomain linker region. A C-terminal regulatory PFK domain 2 region spans residues 404-782 (TVAVMNVGAP…SRKRSGETSI (379 aa)). Beta-D-fructose 2,6-bisphosphate contacts are provided by residues Arg473 and 530 to 534 (TVSNN). O-linked (GlcNAc) serine glycosylation occurs at Ser532. Lys559 is subject to N6-(2-hydroxyisobutyryl)lysine. Residues Arg568, 575–577 (MGG), Glu631, Arg657, and 663–666 (HMQQ) each bind beta-D-fructose 2,6-bisphosphate. Residue Ser669 is modified to Phosphoserine. Residue Arg737 participates in beta-D-fructose 2,6-bisphosphate binding. Ser777 is subject to Phosphoserine.

This sequence belongs to the phosphofructokinase type A (PFKA) family. ATP-dependent PFK group I subfamily. Eukaryotic two domain clade 'E' sub-subfamily. Homo- and heterotetramers. Phosphofructokinase (PFK) enzyme functions as a tetramer composed of different combinations of 3 types of subunits, called PFKM (M), PFKL (L) and PFKP (P). The composition of the PFK tetramer differs according to the tissue type it is present in. The kinetic and regulatory properties of the tetrameric enzyme are dependent on the subunit composition, hence can vary across tissues. Interacts (via C-terminus) with HK1 (via N-terminal spermatogenic cell-specific region). Mg(2+) serves as cofactor. In terms of processing, glcNAcylation decreases enzyme activity.

It is found in the cytoplasm. It carries out the reaction beta-D-fructose 6-phosphate + ATP = beta-D-fructose 1,6-bisphosphate + ADP + H(+). It participates in carbohydrate degradation; glycolysis; D-glyceraldehyde 3-phosphate and glycerone phosphate from D-glucose: step 3/4. Its activity is regulated as follows. Allosterically activated by ADP, AMP, or fructose 2,6-bisphosphate, and allosterically inhibited by ATP or citrate. Functionally, catalyzes the phosphorylation of D-fructose 6-phosphate to fructose 1,6-bisphosphate by ATP, the first committing step of glycolysis. The polypeptide is ATP-dependent 6-phosphofructokinase, muscle type (PFKM) (Canis lupus familiaris (Dog)).